The sequence spans 1085 residues: Carbamoyl phosphate synthase large chain (1085 aa).

The tract at residues 1–399 is carboxyphosphate synthetic domain; it reads MPKRTDISNI…ALQKALCSLE (399 aa). Residues arginine 127, arginine 167, glycine 174, glutamate 206, leucine 208, glutamate 213, glycine 239, valine 240, histidine 241, glutamine 283, and glutamate 297 each coordinate ATP. Positions 131 to 326 constitute an ATP-grasp 1 domain; it reads KEAMLKIGMD…IAKVATMLAV (196 aa). Mg(2+) is bound by residues glutamine 283, glutamate 297, and asparagine 299. Mn(2+)-binding residues include glutamine 283, glutamate 297, and asparagine 299. Positions 400–551 are oligomerization domain; it reads NNWLGFESLS…YAPNPLPPIG (152 aa). Residues 552–951 are carbamoyl phosphate synthetic domain; that stretch reads NKQEKQEKKI…AFFKAQTACF (400 aa). The ATP-grasp 2 domain maps to 678–871; the sequence is SLFLKELDIK…LAKVATRVMV (194 aa). Residues arginine 714, lysine 756, leucine 758, glutamate 763, glycine 788, isoleucine 789, histidine 790, serine 791, glutamine 830, and glutamate 842 each contribute to the ATP site. Mg(2+)-binding residues include glutamine 830, glutamate 842, and asparagine 844. Mn(2+) contacts are provided by glutamine 830, glutamate 842, and asparagine 844. Residues 952 to 1085 enclose the MGS-like domain; sequence NPIKNKGLIF…ELLALQDYLK (134 aa). The allosteric domain stretch occupies residues 952–1085; sequence NPIKNKGLIF…ELLALQDYLK (134 aa).

It belongs to the CarB family. Composed of two chains; the small (or glutamine) chain promotes the hydrolysis of glutamine to ammonia, which is used by the large (or ammonia) chain to synthesize carbamoyl phosphate. Tetramer of heterodimers (alpha,beta)4. It depends on Mg(2+) as a cofactor. The cofactor is Mn(2+).

It carries out the reaction hydrogencarbonate + L-glutamine + 2 ATP + H2O = carbamoyl phosphate + L-glutamate + 2 ADP + phosphate + 2 H(+). The enzyme catalyses hydrogencarbonate + NH4(+) + 2 ATP = carbamoyl phosphate + 2 ADP + phosphate + 2 H(+). It functions in the pathway amino-acid biosynthesis; L-arginine biosynthesis; carbamoyl phosphate from bicarbonate: step 1/1. Its pathway is pyrimidine metabolism; UMP biosynthesis via de novo pathway; (S)-dihydroorotate from bicarbonate: step 1/3. In terms of biological role, large subunit of the glutamine-dependent carbamoyl phosphate synthetase (CPSase). CPSase catalyzes the formation of carbamoyl phosphate from the ammonia moiety of glutamine, carbonate, and phosphate donated by ATP, constituting the first step of 2 biosynthetic pathways, one leading to arginine and/or urea and the other to pyrimidine nucleotides. The large subunit (synthetase) binds the substrates ammonia (free or transferred from glutamine from the small subunit), hydrogencarbonate and ATP and carries out an ATP-coupled ligase reaction, activating hydrogencarbonate by forming carboxy phosphate which reacts with ammonia to form carbamoyl phosphate. This is Carbamoyl phosphate synthase large chain from Helicobacter pylori (strain J99 / ATCC 700824) (Campylobacter pylori J99).